Here is a 158-residue protein sequence, read N- to C-terminus: UPF0725 protein At3g57210 (158 aa).

This sequence belongs to the UPF0725 (EMB2204) family.

In Arabidopsis thaliana (Mouse-ear cress), this protein is UPF0725 protein At3g57210.